The chain runs to 276 residues: Undecaprenyl-diphosphatase 1 (276 aa).

5 helical membrane passes run 83–103 (FTLN…LFEK), 108–128 (VLFS…IILW), 187–207 (VATE…TLYE), 217–237 (VDSL…AFVC), and 252–272 (VFAW…YSGW).

Belongs to the UppP family.

Its subcellular location is the cell inner membrane. The enzyme catalyses di-trans,octa-cis-undecaprenyl diphosphate + H2O = di-trans,octa-cis-undecaprenyl phosphate + phosphate + H(+). In terms of biological role, catalyzes the dephosphorylation of undecaprenyl diphosphate (UPP). Confers resistance to bacitracin. The sequence is that of Undecaprenyl-diphosphatase 1 from Burkholderia cenocepacia (strain HI2424).